The chain runs to 227 residues: Ribonuclease 3 (227 aa).

One can recognise an RNase III domain in the interval 4–133 (FETLEKLLGY…LIAAIYLDSN (130 aa)). Glu-46 lines the Mg(2+) pocket. Asp-50 is a catalytic residue. Residues Asn-119 and Glu-122 each coordinate Mg(2+). Residue Glu-122 is part of the active site. Residues 158–226 (DPKTALQEWA…ARDLLHRLQD (69 aa)) enclose the DRBM domain.

Belongs to the ribonuclease III family. Homodimer. Mg(2+) serves as cofactor.

The protein resides in the cytoplasm. It catalyses the reaction Endonucleolytic cleavage to 5'-phosphomonoester.. Its function is as follows. Digests double-stranded RNA. Involved in the processing of primary rRNA transcript to yield the immediate precursors to the large and small rRNAs (23S and 16S). Processes some mRNAs, and tRNAs when they are encoded in the rRNA operon. Processes pre-crRNA and tracrRNA of type II CRISPR loci if present in the organism. In Rickettsia akari (strain Hartford), this protein is Ribonuclease 3.